The chain runs to 229 residues: Prolactin (229 aa).

An N-terminal signal peptide occupies residues Met1 to Ser30. Cys34 and Cys41 form a disulfide bridge. A phosphoserine mark is found at Ser56, Ser64, and Ser120. Intrachain disulfides connect Cys88–Cys204 and Cys221–Cys229.

Belongs to the somatotropin/prolactin family. As to quaternary structure, interacts with PRLR.

The protein localises to the secreted. Functionally, prolactin acts primarily on the mammary gland by promoting lactation. This chain is Prolactin (PRL), found in Ailuropoda melanoleuca (Giant panda).